Reading from the N-terminus, the 169-residue chain is Ribosomal RNA large subunit methyltransferase H (169 aa).

Residues L85, G117, and L136–W141 each bind S-adenosyl-L-methionine.

This sequence belongs to the RNA methyltransferase RlmH family. Homodimer.

The protein localises to the cytoplasm. The catalysed reaction is pseudouridine(1915) in 23S rRNA + S-adenosyl-L-methionine = N(3)-methylpseudouridine(1915) in 23S rRNA + S-adenosyl-L-homocysteine + H(+). Its function is as follows. Specifically methylates the pseudouridine at position 1915 (m3Psi1915) in 23S rRNA. In Brucella ovis (strain ATCC 25840 / 63/290 / NCTC 10512), this protein is Ribosomal RNA large subunit methyltransferase H.